The chain runs to 310 residues: Aspartate carbamoyltransferase catalytic subunit (310 aa).

2 residues coordinate carbamoyl phosphate: arginine 58 and threonine 59. Position 86 (lysine 86) interacts with L-aspartate. Carbamoyl phosphate is bound by residues arginine 108, histidine 136, and glutamine 139. Arginine 169 and arginine 222 together coordinate L-aspartate. Positions 264 and 265 each coordinate carbamoyl phosphate.

It belongs to the aspartate/ornithine carbamoyltransferase superfamily. ATCase family. As to quaternary structure, heterododecamer (2C3:3R2) of six catalytic PyrB chains organized as two trimers (C3), and six regulatory PyrI chains organized as three dimers (R2).

It carries out the reaction carbamoyl phosphate + L-aspartate = N-carbamoyl-L-aspartate + phosphate + H(+). The protein operates within pyrimidine metabolism; UMP biosynthesis via de novo pathway; (S)-dihydroorotate from bicarbonate: step 2/3. Its function is as follows. Catalyzes the condensation of carbamoyl phosphate and aspartate to form carbamoyl aspartate and inorganic phosphate, the committed step in the de novo pyrimidine nucleotide biosynthesis pathway. In Campylobacter fetus subsp. fetus (strain 82-40), this protein is Aspartate carbamoyltransferase catalytic subunit.